Here is a 753-residue protein sequence, read N- to C-terminus: Ribosome biogenesis protein BOP1 homolog (753 aa).

Residues 1 to 155 are disordered; that stretch reads MTKRSKGANE…RNTVGNVPLK (155 aa). Basic and acidic residues-rich tracts occupy residues 7 to 18 and 30 to 41; these read GANEDKLIETKS and KPVEAESLKEED. 2 stretches are compositionally biased toward acidic residues: residues 64 to 75 and 83 to 109; these read DDFDSDFSDSED and EDGD…DDDG. Basic and acidic residues predominate over residues 110–121; the sequence is SEHVGSDNNEEH. Positions 122–142 are enriched in acidic residues; it reads GSDEDSERGEAVEESDSSEDE. WD repeat units lie at residues 421 to 462, 464 to 502, 539 to 581, 626 to 665, 669 to 708, and 722 to 753; these read GHTG…KVWQ, DEAI…DEEQ, RHFK…TQRL, TGLR…KPYK, NHPK…DLNQ, and SSKG…LYCH.

It belongs to the WD repeat BOP1/ERB1 family. In terms of assembly, interacts with PES. Interacts with WDR12.

It is found in the nucleus. It localises to the nucleolus. The protein resides in the nucleoplasm. In terms of biological role, required for maturation of ribosomal RNAs and formation of the large ribosomal subunit. Plays an essential role in cell growth and survival through its regulation of ribosome biogenesis and mitotic progression. The sequence is that of Ribosome biogenesis protein BOP1 homolog from Arabidopsis thaliana (Mouse-ear cress).